Consider the following 236-residue polypeptide: tRNA (guanine-N(7)-)-methyltransferase (236 aa).

S-adenosyl-L-methionine-binding residues include glutamate 43, aspartate 68, asparagine 102, and asparagine 125. Residues lysine 129 and aspartate 161 each coordinate substrate.

It belongs to the class I-like SAM-binding methyltransferase superfamily. TrmB family.

The catalysed reaction is guanosine(46) in tRNA + S-adenosyl-L-methionine = N(7)-methylguanosine(46) in tRNA + S-adenosyl-L-homocysteine. It functions in the pathway tRNA modification; N(7)-methylguanine-tRNA biosynthesis. Its function is as follows. Catalyzes the formation of N(7)-methylguanine at position 46 (m7G46) in tRNA. This Ruminiclostridium cellulolyticum (strain ATCC 35319 / DSM 5812 / JCM 6584 / H10) (Clostridium cellulolyticum) protein is tRNA (guanine-N(7)-)-methyltransferase.